The primary structure comprises 286 residues: Urease accessory protein UreD 2 (286 aa).

It belongs to the UreD family. As to quaternary structure, ureD, UreF and UreG form a complex that acts as a GTP-hydrolysis-dependent molecular chaperone, activating the urease apoprotein by helping to assemble the nickel containing metallocenter of UreC. The UreE protein probably delivers the nickel.

The protein resides in the cytoplasm. Required for maturation of urease via the functional incorporation of the urease nickel metallocenter. The protein is Urease accessory protein UreD 2 of Bradyrhizobium sp. (strain BTAi1 / ATCC BAA-1182).